We begin with the raw amino-acid sequence, 234 residues long: Chalcone--flavanone isomerase 1 (234 aa).

Substrate-binding residues include threonine 50, asparagine 115, and serine 192.

Belongs to the chalcone isomerase family.

The catalysed reaction is a chalcone = a flavanone.. The protein operates within secondary metabolite biosynthesis; flavonoid biosynthesis. Functionally, catalyzes the intramolecular cyclization of bicyclic chalcones into tricyclic (S)-flavanones. Responsible for the isomerization of 4,2',4',6'-tetrahydroxychalcone (also termed chalcone) into naringenin. The protein is Chalcone--flavanone isomerase 1 (CHI1) of Vitis vinifera (Grape).